The chain runs to 363 residues: UDP-N-acetylglucosamine--N-acetylmuramyl-(pentapeptide) pyrophosphoryl-undecaprenol N-acetylglucosamine transferase (363 aa).

UDP-N-acetyl-alpha-D-glucosamine contacts are provided by residues 10 to 12, N124, S195, I250, and Q295; that span reads TGG.

This sequence belongs to the glycosyltransferase 28 family. MurG subfamily.

The protein localises to the cell membrane. The enzyme catalyses di-trans,octa-cis-undecaprenyl diphospho-N-acetyl-alpha-D-muramoyl-L-alanyl-D-glutamyl-meso-2,6-diaminopimeloyl-D-alanyl-D-alanine + UDP-N-acetyl-alpha-D-glucosamine = di-trans,octa-cis-undecaprenyl diphospho-[N-acetyl-alpha-D-glucosaminyl-(1-&gt;4)]-N-acetyl-alpha-D-muramoyl-L-alanyl-D-glutamyl-meso-2,6-diaminopimeloyl-D-alanyl-D-alanine + UDP + H(+). It functions in the pathway cell wall biogenesis; peptidoglycan biosynthesis. In terms of biological role, cell wall formation. Catalyzes the transfer of a GlcNAc subunit on undecaprenyl-pyrophosphoryl-MurNAc-pentapeptide (lipid intermediate I) to form undecaprenyl-pyrophosphoryl-MurNAc-(pentapeptide)GlcNAc (lipid intermediate II). This is UDP-N-acetylglucosamine--N-acetylmuramyl-(pentapeptide) pyrophosphoryl-undecaprenol N-acetylglucosamine transferase from Listeria monocytogenes serotype 4b (strain CLIP80459).